Consider the following 180-residue polypeptide: MSRIGRLPIEIPKGVEVKVTPDNVVTVKGSKGTLEKKFPPIVNIEVKDNQVIVTRKGDDKEEKAMHGTTRAIIANMVKGVTEGFEKALEIVGIGYRAAKQGKKLVLNVGYSHPVEIEEKPGIEIIVEGNNKIIVRGIDKEKVGQVAANIRRVREPDAYQGKGIRYAGEVVRLKEGKTGKK.

It belongs to the universal ribosomal protein uL6 family. Part of the 50S ribosomal subunit.

Its function is as follows. This protein binds to the 23S rRNA, and is important in its secondary structure. It is located near the subunit interface in the base of the L7/L12 stalk, and near the tRNA binding site of the peptidyltransferase center. This Thermoanaerobacter sp. (strain X514) protein is Large ribosomal subunit protein uL6.